A 313-amino-acid chain; its full sequence is Postacrosomal sheath WW domain-binding protein (313 aa).

The GRAM domain maps to 8 to 87 (TESRRGALIP…GLMSDCTIEQ (80 aa)). A run of 12 repeats spans residues 179–185 (YGPPPPG), 193–199 (YGTPPEG), 207–213 (YGAPPMG), 214–220 (YGAPPVG), 221–227 (YGVPPGG), 228–234 (YGVPPGG), 235–241 (YGVPPGG), 242–248 (YGAPPGG), 249–255 (YGVPPGG), 256–262 (YGAPPGG), 263–269 (YGAPPAG), and 270–276 (YGAPPAG). Positions 179 to 276 (YGPPPPGYTV…PAGYGAPPAG (98 aa)) are 12 X 7 AA tandem repeat of Y-G-X-P-P-X-G. Residues 183–186 (PPGY) carry the PPxY motif 1 motif. Residues 254-264 (GGYGAPPGGYG) show a composition bias toward gly residues. The interval 254-313 (GGYGAPPGGYGAPPAGYGAPPAGNEALPPAYEAPSAGNTAASHRSMTAQQETSLPTTSSS) is disordered. Residues 265 to 276 (APPAGYGAPPAG) show a composition bias toward low complexity. Residues 281–284 (PPAY) carry the PPxY motif 2 motif. Residues 289–313 (AGNTAASHRSMTAQQETSLPTTSSS) are compositionally biased toward polar residues.

In terms of tissue distribution, expressed in testis.

In terms of biological role, may play a role in meiotic resumption and pronuclear formation, mediated by a WW domain-signaling pathway during fertilization. The sequence is that of Postacrosomal sheath WW domain-binding protein (WBP2NL) from Bos taurus (Bovine).